We begin with the raw amino-acid sequence, 81 residues long: uncharacterized protein (81 aa).

This sequence to M.thermoautotrophicum MTH886.

This is an uncharacterized protein from Methanocaldococcus jannaschii (strain ATCC 43067 / DSM 2661 / JAL-1 / JCM 10045 / NBRC 100440) (Methanococcus jannaschii).